We begin with the raw amino-acid sequence, 310 residues long: L-lactate dehydrogenase (310 aa).

NAD(+) contacts are provided by residues 10-11 (MV), D32, Y62, and 76-77 (GV). Substrate-binding positions include Q79, R85, and 117–120 (NPVD). NAD(+) contacts are provided by residues 115–117 (ATN) and S140. 145 to 148 (DTAR) is a substrate binding site. Beta-D-fructose 1,6-bisphosphate is bound by residues R150 and H165. H172 serves as the catalytic Proton acceptor. Phosphotyrosine is present on Y218. T227 serves as a coordination point for substrate.

It belongs to the LDH/MDH superfamily. LDH family. Homotetramer.

It localises to the cytoplasm. It catalyses the reaction (S)-lactate + NAD(+) = pyruvate + NADH + H(+). Its pathway is fermentation; pyruvate fermentation to lactate; (S)-lactate from pyruvate: step 1/1. Allosterically activated by fructose 1,6-bisphosphate (FBP). In terms of biological role, catalyzes the conversion of lactate to pyruvate. This chain is L-lactate dehydrogenase, found in Thermus thermophilus (strain ATCC 27634 / DSM 579 / HB8).